A 507-amino-acid chain; its full sequence is Phospho-2-dehydro-3-deoxyheptonate aldolase 2, chloroplastic (507 aa).

This sequence belongs to the class-II DAHP synthase family.

Its subcellular location is the plastid. It is found in the chloroplast. The enzyme catalyses D-erythrose 4-phosphate + phosphoenolpyruvate + H2O = 7-phospho-2-dehydro-3-deoxy-D-arabino-heptonate + phosphate. It participates in metabolic intermediate biosynthesis; chorismate biosynthesis; chorismate from D-erythrose 4-phosphate and phosphoenolpyruvate: step 1/7. This chain is Phospho-2-dehydro-3-deoxyheptonate aldolase 2, chloroplastic (DHS2), found in Arabidopsis thaliana (Mouse-ear cress).